The following is a 580-amino-acid chain: Malto-oligosyltrehalose trehalohydrolase (580 aa).

Positions 56 to 88 (LPDPRSARQPDGVHARSQRWEPPGQFGAARTDT) are disordered. The segment covering 60–69 (RSARQPDGVH) has biased composition (basic and acidic residues). 245-250 (RLDAVH) provides a ligand contact to substrate. The active-site Nucleophile is the Asp247. The active-site Proton donor is the Glu284. Substrate-binding positions include 309 to 313 (DDIHH) and 379 to 384 (HDQVGN).

It belongs to the glycosyl hydrolase 13 family.

It localises to the cytoplasm. It catalyses the reaction hydrolysis of (1-&gt;4)-alpha-D-glucosidic linkage in 4-alpha-D-[(1-&gt;4)-alpha-D-glucanosyl]n trehalose to yield trehalose and (1-&gt;4)-alpha-D-glucan.. Its pathway is glycan biosynthesis; trehalose biosynthesis. Its function is as follows. Is involved in the biosynthesis of trehalose but not in that of capsular glucan and glycogen. This Mycobacterium tuberculosis (strain CDC 1551 / Oshkosh) protein is Malto-oligosyltrehalose trehalohydrolase (treZ).